The following is a 161-amino-acid chain: DNA-binding protein inhibitor ID-4 (161 aa).

Residues 52–104 (AAEAAADEPALCLQCDMNDCYSRLRRLVPTIPPNKKVSKVEILQHVIDYILDL) form the bHLH domain.

As to quaternary structure, heterodimer with other HLH proteins.

It is found in the nucleus. Transcriptional regulator (lacking a basic DNA binding domain) which negatively regulates the basic helix-loop-helix (bHLH) transcription factors by forming heterodimers and inhibiting their DNA binding and transcriptional activity. Implicated in regulating a variety of cellular processes, including cellular growth, senescence, differentiation, apoptosis, angiogenesis, and neoplastic transformation. The chain is DNA-binding protein inhibitor ID-4 (Id4) from Mus musculus (Mouse).